A 38-amino-acid polypeptide reads, in one-letter code: Photosystem II reaction center protein L (38 aa).

The chain crosses the membrane as a helical span at residues 17 to 37; it reads SLYWGLLLIFVLAVPFSNYFF.

Belongs to the PsbL family. As to quaternary structure, PSII is composed of 1 copy each of membrane proteins PsbA, PsbB, PsbC, PsbD, PsbE, PsbF, PsbH, PsbI, PsbJ, PsbK, PsbL, PsbM, PsbT, PsbX, PsbY, PsbZ, Psb30/Ycf12, at least 3 peripheral proteins of the oxygen-evolving complex and a large number of cofactors. It forms dimeric complexes.

It localises to the plastid. The protein localises to the chloroplast thylakoid membrane. Its function is as follows. One of the components of the core complex of photosystem II (PSII). PSII is a light-driven water:plastoquinone oxidoreductase that uses light energy to abstract electrons from H(2)O, generating O(2) and a proton gradient subsequently used for ATP formation. It consists of a core antenna complex that captures photons, and an electron transfer chain that converts photonic excitation into a charge separation. This subunit is found at the monomer-monomer interface and is required for correct PSII assembly and/or dimerization. The protein is Photosystem II reaction center protein L of Cedrus deodara (Deodar cedar).